We begin with the raw amino-acid sequence, 461 residues long: Spermidine/putrescine import ATP-binding protein PotA (461 aa).

Residues 10 to 240 enclose the ABC transporter domain; the sequence is IEVNGVSKFF…PINSFVADFI (231 aa). 42–49 contacts ATP; it reads GPSGCGKT.

Belongs to the ABC transporter superfamily. Spermidine/putrescine importer (TC 3.A.1.11.1) family. The complex is composed of two ATP-binding proteins (PotA), two transmembrane proteins (PotB and PotC) and a solute-binding protein (PotD).

The protein resides in the cell inner membrane. The catalysed reaction is ATP + H2O + polyamine-[polyamine-binding protein]Side 1 = ADP + phosphate + polyamineSide 2 + [polyamine-binding protein]Side 1.. Part of the ABC transporter complex PotABCD involved in spermidine/putrescine import. Responsible for energy coupling to the transport system. This is Spermidine/putrescine import ATP-binding protein PotA from Bacteroides fragilis (strain YCH46).